The sequence spans 80 residues: Cortexin-3 (80 aa).

Residues 28–48 (TTFVFVILLFIFLGILIVRCF) traverse the membrane as a helical segment.

This sequence belongs to the cortexin family.

Its subcellular location is the membrane. This chain is Cortexin-3 (Ctxn3), found in Mus musculus (Mouse).